The primary structure comprises 163 residues: ATP synthase subunit b' (163 aa).

The chain crosses the membrane as a helical span at residues 28–45 (LMAIQFLLLALILNATLY).

Belongs to the ATPase B chain family. In terms of assembly, F-type ATPases have 2 components, F(1) - the catalytic core - and F(0) - the membrane proton channel. F(1) has five subunits: alpha(3), beta(3), gamma(1), delta(1), epsilon(1). F(0) has four main subunits: a(1), b(1), b'(1) and c(10-14). The alpha and beta chains form an alternating ring which encloses part of the gamma chain. F(1) is attached to F(0) by a central stalk formed by the gamma and epsilon chains, while a peripheral stalk is formed by the delta, b and b' chains.

The protein resides in the cellular thylakoid membrane. Functionally, f(1)F(0) ATP synthase produces ATP from ADP in the presence of a proton or sodium gradient. F-type ATPases consist of two structural domains, F(1) containing the extramembraneous catalytic core and F(0) containing the membrane proton channel, linked together by a central stalk and a peripheral stalk. During catalysis, ATP synthesis in the catalytic domain of F(1) is coupled via a rotary mechanism of the central stalk subunits to proton translocation. Its function is as follows. Component of the F(0) channel, it forms part of the peripheral stalk, linking F(1) to F(0). The b'-subunit is a diverged and duplicated form of b found in plants and photosynthetic bacteria. This Nostoc sp. (strain PCC 7120 / SAG 25.82 / UTEX 2576) protein is ATP synthase subunit b'.